A 97-amino-acid chain; its full sequence is ATP-dependent Clp protease adapter protein ClpS (97 aa).

The protein belongs to the ClpS family. As to quaternary structure, binds to the N-terminal domain of the chaperone ClpA.

Functionally, involved in the modulation of the specificity of the ClpAP-mediated ATP-dependent protein degradation. This is ATP-dependent Clp protease adapter protein ClpS from Nautilia profundicola (strain ATCC BAA-1463 / DSM 18972 / AmH).